Reading from the N-terminus, the 301-residue chain is NAD kinase 2 (301 aa).

D77 acts as the Proton acceptor in catalysis. Residues 77 to 78, R82, 151 to 152, K162, D181, and 192 to 197 contribute to the NAD(+) site; these read DG, NE, and TAYAFS.

Belongs to the NAD kinase family. A divalent metal cation is required as a cofactor.

The protein resides in the cytoplasm. It catalyses the reaction NAD(+) + ATP = ADP + NADP(+) + H(+). Functionally, involved in the regulation of the intracellular balance of NAD and NADP, and is a key enzyme in the biosynthesis of NADP. Catalyzes specifically the phosphorylation on 2'-hydroxyl of the adenosine moiety of NAD to yield NADP. The chain is NAD kinase 2 from Streptomyces coelicolor (strain ATCC BAA-471 / A3(2) / M145).